Here is a 377-residue protein sequence, read N- to C-terminus: Putative FBD-associated F-box protein At5g44940 (377 aa).

The F-box domain occupies Phe-4–Arg-50. The FBD domain occupies Ile-297–Phe-346.

The sequence is that of Putative FBD-associated F-box protein At5g44940 from Arabidopsis thaliana (Mouse-ear cress).